The chain runs to 581 residues: Putative protein phosphatase 2C 22 (581 aa).

The N-terminal stretch at 1–21 (MVISVPLFSSVLLALVVAVPA) is a signal peptide. Positions 102 to 478 (KYASSAMQGL…NNATAILVQF (377 aa)) constitute a PPM-type phosphatase domain. 4 residues coordinate Mn(2+): Asp-138, Gly-139, Asp-373, and Asn-469. Positions 538–563 (SDEVAGGAAVAEQHQHNPEGGGEQQL) are disordered.

The protein belongs to the PP2C family. It depends on Mg(2+) as a cofactor. Mn(2+) is required as a cofactor.

It carries out the reaction O-phospho-L-seryl-[protein] + H2O = L-seryl-[protein] + phosphate. The catalysed reaction is O-phospho-L-threonyl-[protein] + H2O = L-threonyl-[protein] + phosphate. In Oryza sativa subsp. japonica (Rice), this protein is Putative protein phosphatase 2C 22.